Here is a 291-residue protein sequence, read N- to C-terminus: 4-hydroxy-tetrahydrodipicolinate synthase (291 aa).

Threonine 42 is a pyruvate binding site. Residue tyrosine 129 is the Proton donor/acceptor of the active site. Lysine 157 (schiff-base intermediate with substrate) is an active-site residue. Isoleucine 198 is a pyruvate binding site.

This sequence belongs to the DapA family. In terms of assembly, homotetramer; dimer of dimers.

Its subcellular location is the cytoplasm. It catalyses the reaction L-aspartate 4-semialdehyde + pyruvate = (2S,4S)-4-hydroxy-2,3,4,5-tetrahydrodipicolinate + H2O + H(+). It participates in amino-acid biosynthesis; L-lysine biosynthesis via DAP pathway; (S)-tetrahydrodipicolinate from L-aspartate: step 3/4. Functionally, catalyzes the condensation of (S)-aspartate-beta-semialdehyde [(S)-ASA] and pyruvate to 4-hydroxy-tetrahydrodipicolinate (HTPA). In Chlamydia pneumoniae (Chlamydophila pneumoniae), this protein is 4-hydroxy-tetrahydrodipicolinate synthase.